Consider the following 89-residue polypeptide: Small ribosomal subunit protein uS15 (89 aa).

Belongs to the universal ribosomal protein uS15 family. In terms of assembly, part of the 30S ribosomal subunit. Forms a bridge to the 50S subunit in the 70S ribosome, contacting the 23S rRNA.

Its function is as follows. One of the primary rRNA binding proteins, it binds directly to 16S rRNA where it helps nucleate assembly of the platform of the 30S subunit by binding and bridging several RNA helices of the 16S rRNA. Forms an intersubunit bridge (bridge B4) with the 23S rRNA of the 50S subunit in the ribosome. This chain is Small ribosomal subunit protein uS15, found in Cupriavidus metallidurans (strain ATCC 43123 / DSM 2839 / NBRC 102507 / CH34) (Ralstonia metallidurans).